Consider the following 381-residue polypeptide: Queuine tRNA-ribosyltransferase (381 aa).

Residue aspartate 92 is the Proton acceptor of the active site. Substrate-binding positions include 92 to 96, aspartate 146, glutamine 190, and glycine 217; that span reads DSGGF. Positions 248-254 are RNA binding; it reads GVGRPED. Residue aspartate 267 is the Nucleophile of the active site. The interval 272-276 is RNA binding; important for wobble base 34 recognition; that stretch reads TRNAR. Residues cysteine 305, cysteine 307, cysteine 310, and histidine 337 each contribute to the Zn(2+) site.

This sequence belongs to the queuine tRNA-ribosyltransferase family. As to quaternary structure, homodimer. Within each dimer, one monomer is responsible for RNA recognition and catalysis, while the other monomer binds to the replacement base PreQ1. The cofactor is Zn(2+).

The enzyme catalyses 7-aminomethyl-7-carbaguanine + guanosine(34) in tRNA = 7-aminomethyl-7-carbaguanosine(34) in tRNA + guanine. It functions in the pathway tRNA modification; tRNA-queuosine biosynthesis. Catalyzes the base-exchange of a guanine (G) residue with the queuine precursor 7-aminomethyl-7-deazaguanine (PreQ1) at position 34 (anticodon wobble position) in tRNAs with GU(N) anticodons (tRNA-Asp, -Asn, -His and -Tyr). Catalysis occurs through a double-displacement mechanism. The nucleophile active site attacks the C1' of nucleotide 34 to detach the guanine base from the RNA, forming a covalent enzyme-RNA intermediate. The proton acceptor active site deprotonates the incoming PreQ1, allowing a nucleophilic attack on the C1' of the ribose to form the product. After dissociation, two additional enzymatic reactions on the tRNA convert PreQ1 to queuine (Q), resulting in the hypermodified nucleoside queuosine (7-(((4,5-cis-dihydroxy-2-cyclopenten-1-yl)amino)methyl)-7-deazaguanosine). The chain is Queuine tRNA-ribosyltransferase from Xanthomonas campestris pv. campestris (strain 8004).